The primary structure comprises 391 residues: 23S rRNA (uracil(747)-C(5))-methyltransferase RlmC (391 aa).

Residues Cys-5, Cys-13, Cys-16, and Cys-95 each coordinate [4Fe-4S] cluster. Gln-220, Phe-249, Glu-276, and Asn-322 together coordinate S-adenosyl-L-methionine. Residue Cys-349 is the Nucleophile of the active site.

Belongs to the class I-like SAM-binding methyltransferase superfamily. RNA M5U methyltransferase family. RlmC subfamily.

It carries out the reaction uridine(747) in 23S rRNA + S-adenosyl-L-methionine = 5-methyluridine(747) in 23S rRNA + S-adenosyl-L-homocysteine + H(+). Catalyzes the formation of 5-methyl-uridine at position 747 (m5U747) in 23S rRNA. The polypeptide is 23S rRNA (uracil(747)-C(5))-methyltransferase RlmC (Actinobacillus pleuropneumoniae serotype 5b (strain L20)).